The following is a 581-amino-acid chain: MATIGRRAYAEMFGPTVGDRVRLADTNLIIEVEDDYTLRAGGYGEEVKFGGGKTIRDGMAQSQRSRAEGAVDTVMTNALIIDHWGIVKADIGLKDSRIVAIGKAGNPDTQPGVDIIIGPGTEVISCEGSIVTAGGFDSHIHFICPQLIEEALSSGITTMTGGGTGPATGTFATTCTPGSWHIERMLQAADAFAMNLGFMGKGNASLPAALHEQINAGALGLKLHEDWGTTPAAIDNCLNVAELTDTQVAIHTDTLNESGFVEDTLAAFKGRSIHTFHTEGAGGGHAPDIMKLVGEPNVLPSSTNPTRPYTVNTLDEHVDMLMVCHHLDAAIAEDLAFAESRIRKETIAAEDILHDLGAISIMSSDSQAMGRVGEVIIRTWQTAHKMKAQRGWLAPPPERSEPVEKLQRNDNYRVKRYLAKYTINPALTHGMAHEVGSIELGKWADLVVWRPAFFGVKPSLIVKGGSIAMAAMGDPNASIPTPQPVHYRPMFGAFGGALARGSLTFVSQAGLNAGIGARYGLSKTLSAVKNIRGIRKEHMVHNHYLPKMEIDAQTYSVRADGELLTCEPAVSLPMTQRYFLF.

The 448-residue stretch at 134–581 folds into the Urease domain; sequence GGFDSHIHFI…LPMTQRYFLF (448 aa). The Ni(2+) site is built by histidine 139, histidine 141, and lysine 222. Lysine 222 carries the post-translational modification N6-carboxylysine. Substrate is bound at residue histidine 224. Ni(2+)-binding residues include histidine 251 and histidine 277. Histidine 325 (proton donor) is an active-site residue. Aspartate 365 contacts Ni(2+).

This sequence belongs to the metallo-dependent hydrolases superfamily. Urease alpha subunit family. In terms of assembly, heterotrimer of UreA (gamma), UreB (beta) and UreC (alpha) subunits. Three heterotrimers associate to form the active enzyme. The cofactor is Ni cation. Post-translationally, carboxylation allows a single lysine to coordinate two nickel ions.

Its subcellular location is the cytoplasm. It carries out the reaction urea + 2 H2O + H(+) = hydrogencarbonate + 2 NH4(+). The protein operates within nitrogen metabolism; urea degradation; CO(2) and NH(3) from urea (urease route): step 1/1. This chain is Urease subunit alpha, found in Albidiferax ferrireducens (strain ATCC BAA-621 / DSM 15236 / T118) (Rhodoferax ferrireducens).